A 374-amino-acid chain; its full sequence is Tryptophan--tRNA ligase (374 aa).

The 'HIGH' region signature appears at 71–79; sequence PSGRMHLGH. Positions 247–251 match the 'KMSKS' region motif; that stretch reads KMSSS.

This sequence belongs to the class-I aminoacyl-tRNA synthetase family.

It is found in the cytoplasm. The catalysed reaction is tRNA(Trp) + L-tryptophan + ATP = L-tryptophyl-tRNA(Trp) + AMP + diphosphate + H(+). The protein is Tryptophan--tRNA ligase of Methanopyrus kandleri (strain AV19 / DSM 6324 / JCM 9639 / NBRC 100938).